The primary structure comprises 116 residues: Large ribosomal subunit protein uL18 (116 aa).

This sequence belongs to the universal ribosomal protein uL18 family. Part of the 50S ribosomal subunit; part of the 5S rRNA/L5/L18/L25 subcomplex. Contacts the 5S and 23S rRNAs.

Functionally, this is one of the proteins that bind and probably mediate the attachment of the 5S RNA into the large ribosomal subunit, where it forms part of the central protuberance. This chain is Large ribosomal subunit protein uL18, found in Azotobacter vinelandii (strain DJ / ATCC BAA-1303).